Consider the following 160-residue polypeptide: S-ribosylhomocysteine lyase (160 aa).

His-57, His-61, and Cys-127 together coordinate Fe cation.

The protein belongs to the LuxS family. As to quaternary structure, homodimer. Fe cation is required as a cofactor.

The enzyme catalyses S-(5-deoxy-D-ribos-5-yl)-L-homocysteine = (S)-4,5-dihydroxypentane-2,3-dione + L-homocysteine. Involved in the synthesis of autoinducer 2 (AI-2) which is secreted by bacteria and is used to communicate both the cell density and the metabolic potential of the environment. The regulation of gene expression in response to changes in cell density is called quorum sensing. Catalyzes the transformation of S-ribosylhomocysteine (RHC) to homocysteine (HC) and 4,5-dihydroxy-2,3-pentadione (DPD). This chain is S-ribosylhomocysteine lyase, found in Streptococcus gordonii (strain Challis / ATCC 35105 / BCRC 15272 / CH1 / DL1 / V288).